Consider the following 156-residue polypeptide: Small ribosomal subunit protein uS7 (156 aa).

This sequence belongs to the universal ribosomal protein uS7 family. Part of the 30S ribosomal subunit. Contacts proteins S9 and S11.

Its function is as follows. One of the primary rRNA binding proteins, it binds directly to 16S rRNA where it nucleates assembly of the head domain of the 30S subunit. Is located at the subunit interface close to the decoding center, probably blocks exit of the E-site tRNA. This chain is Small ribosomal subunit protein uS7, found in Clostridium beijerinckii (strain ATCC 51743 / NCIMB 8052) (Clostridium acetobutylicum).